A 736-amino-acid polypeptide reads, in one-letter code: Catalase-peroxidase (736 aa).

Residues 96-224 (WHSAGTYRTG…LAAVQMGLIY (129 aa)) constitute a cross-link (tryptophyl-tyrosyl-methioninium (Trp-Tyr) (with M-250)). Histidine 97 functions as the Proton acceptor in the catalytic mechanism. The segment at residues 224–250 (YVNPEGPDGNPDPVASGRDVRETFGRM) is a cross-link (tryptophyl-tyrosyl-methioninium (Tyr-Met) (with W-96)). Residue histidine 265 participates in heme b binding.

Belongs to the peroxidase family. Peroxidase/catalase subfamily. In terms of assembly, homodimer or homotetramer. Heme b is required as a cofactor. Post-translationally, formation of the three residue Trp-Tyr-Met cross-link is important for the catalase, but not the peroxidase activity of the enzyme.

The catalysed reaction is H2O2 + AH2 = A + 2 H2O. It catalyses the reaction 2 H2O2 = O2 + 2 H2O. Functionally, bifunctional enzyme with both catalase and broad-spectrum peroxidase activity. This is Catalase-peroxidase from Pelobacter propionicus (strain DSM 2379 / NBRC 103807 / OttBd1).